A 169-amino-acid polypeptide reads, in one-letter code: S-ribosylhomocysteine lyase (169 aa).

H54, H58, and C128 together coordinate Fe cation.

This sequence belongs to the LuxS family. As to quaternary structure, homodimer. The cofactor is Fe cation.

It carries out the reaction S-(5-deoxy-D-ribos-5-yl)-L-homocysteine = (S)-4,5-dihydroxypentane-2,3-dione + L-homocysteine. Functionally, involved in the synthesis of autoinducer 2 (AI-2) which is secreted by bacteria and is used to communicate both the cell density and the metabolic potential of the environment. The regulation of gene expression in response to changes in cell density is called quorum sensing. Catalyzes the transformation of S-ribosylhomocysteine (RHC) to homocysteine (HC) and 4,5-dihydroxy-2,3-pentadione (DPD). The protein is S-ribosylhomocysteine lyase of Shewanella baltica (strain OS223).